The chain runs to 865 residues: cGMP-specific 3',5'-cyclic phosphodiesterase (865 aa).

Phosphoserine is present on serine 92. GAF domains are found at residues aspartate 154 to leucine 304 and serine 336 to isoleucine 493. Residues glutamate 526 to glutamine 850 enclose the PDEase domain. Residue histidine 603 is the Proton donor of the active site. Zn(2+) contacts are provided by histidine 607, histidine 643, aspartate 644, and aspartate 754. Aspartate 644 contributes to the Mg(2+) binding site. Residue glutamine 807 participates in 3',5'-cyclic GMP binding.

Belongs to the cyclic nucleotide phosphodiesterase family. Zn(2+) serves as cofactor. The cofactor is Mg(2+). In terms of processing, phosphorylation is regulated by binding of cGMP to the two allosteric sites. Phosphorylation by PRKG1 leads to its activation.

It catalyses the reaction 3',5'-cyclic GMP + H2O = GMP + H(+). Its pathway is purine metabolism; 3',5'-cyclic GMP degradation; GMP from 3',5'-cyclic GMP: step 1/1. In terms of biological role, plays a role in signal transduction by regulating the intracellular concentration of cyclic nucleotides. This phosphodiesterase catalyzes the specific hydrolysis of cGMP to 5'-GMP. Specifically regulates nitric-oxide-generated cGMP. In Mus musculus (Mouse), this protein is cGMP-specific 3',5'-cyclic phosphodiesterase (Pde5a).